A 968-amino-acid chain; its full sequence is Alanine--tRNA ligase, cytoplasmic (968 aa).

Met1 is subject to N-acetylmethionine. Phosphoserine is present on residues Ser3 and Ser8. Lys19 is subject to N6-acetyllysine. ATP-binding positions include Arg77, His95, Trp176, and 214-216 (IWN). L-alanine contacts are provided by Asn216 and Asp239. ATP is bound at residue Gly243. A phosphoserine mark is found at Ser399 and Ser555. Positions 605, 609, 723, and 727 each coordinate Zn(2+). Residues 750–763 (RRIVAVTGAEAQKA) carry the Nuclear localization signal motif. Lys876 carries the N6-acetyllysine modification. Position 943 is an N6,N6,N6-trimethyllysine; alternate (Lys943). The residue at position 943 (Lys943) is an N6,N6-dimethyllysine; alternate. Position 943 is an N6-methyllysine; alternate (Lys943).

This sequence belongs to the class-II aminoacyl-tRNA synthetase family. As to quaternary structure, monomer. Interacts with ANKRD16; the interaction is direct. Zn(2+) is required as a cofactor. ISGylated. Post-translationally, methylation at 'Lys-943' by METTL21C.

It is found in the cytoplasm. The protein localises to the nucleus. It catalyses the reaction tRNA(Ala) + L-alanine + ATP = L-alanyl-tRNA(Ala) + AMP + diphosphate. The catalysed reaction is (S)-lactate + ATP + H(+) = (S)-lactoyl-AMP + diphosphate. The enzyme catalyses (S)-lactoyl-AMP + L-lysyl-[protein] = N(6)-[(S)-lactoyl]-L-lysyl-[protein] + AMP + 2 H(+). Its activity is regulated as follows. The protein lactyltransferase activity is inhibited by beta-alanine. Functionally, catalyzes the attachment of alanine to tRNA(Ala) in a two-step reaction: alanine is first activated by ATP to form Ala-AMP and then transferred to the acceptor end of tRNA(Ala). Also edits incorrectly charged tRNA(Ala) via its editing domain. In presence of high levels of lactate, also acts as a protein lactyltransferase that mediates lactylation of lysine residues in target proteins, such as TEAD1, TP53/p53 and YAP1. Protein lactylation takes place in a two-step reaction: lactate is first activated by ATP to form lactate-AMP and then transferred to lysine residues of target proteins. Acts as an inhibitor of TP53/p53 activity by catalyzing lactylation of TP53/p53. Acts as a positive regulator of the Hippo pathway by mediating lactylation of TEAD1 and YAP1. This Pongo abelii (Sumatran orangutan) protein is Alanine--tRNA ligase, cytoplasmic (AARS1).